The following is a 307-amino-acid chain: Ornithine carbamoyltransferase (307 aa).

Residues 56-59, glutamine 83, arginine 107, and 134-137 each bind carbamoyl phosphate; these read STRT and HPCQ. L-ornithine contacts are provided by residues asparagine 165, aspartate 223, and 227–228; that span reads SM. Carbamoyl phosphate-binding positions include 263–264 and arginine 291; that span reads CL.

The protein belongs to the aspartate/ornithine carbamoyltransferase superfamily. OTCase family.

It is found in the cytoplasm. It catalyses the reaction carbamoyl phosphate + L-ornithine = L-citrulline + phosphate + H(+). It participates in amino-acid biosynthesis; L-arginine biosynthesis; L-arginine from L-ornithine and carbamoyl phosphate: step 1/3. Functionally, reversibly catalyzes the transfer of the carbamoyl group from carbamoyl phosphate (CP) to the N(epsilon) atom of ornithine (ORN) to produce L-citrulline. The sequence is that of Ornithine carbamoyltransferase from Cupriavidus metallidurans (strain ATCC 43123 / DSM 2839 / NBRC 102507 / CH34) (Ralstonia metallidurans).